The chain runs to 67 residues: Probable Sec-independent protein translocase protein TatE (67 aa).

A helical membrane pass occupies residues 1 to 21; it reads MEGISIAKLLIIGALIVLLFG. Positions 44–67 are disordered; that stretch reads KDEDTSAARTTAEETPAERVSHKD.

The protein belongs to the TatA/E family. TatE subfamily.

It localises to the cell inner membrane. In terms of biological role, part of the twin-arginine translocation (Tat) system that transports large folded proteins containing a characteristic twin-arginine motif in their signal peptide across membranes. TatE shares overlapping functions with TatA. This chain is Probable Sec-independent protein translocase protein TatE, found in Pantoea ananatis (strain LMG 20103).